A 466-amino-acid polypeptide reads, in one-letter code: Soluble pyridine nucleotide transhydrogenase (466 aa).

FAD is bound at residue 36–45 (ERYQNVGGGC).

This sequence belongs to the class-I pyridine nucleotide-disulfide oxidoreductase family. As to quaternary structure, homooligomer; probable homooctamer. FAD serves as cofactor.

Its subcellular location is the cytoplasm. The catalysed reaction is NAD(+) + NADPH = NADH + NADP(+). Conversion of NADPH, generated by peripheral catabolic pathways, to NADH, which can enter the respiratory chain for energy generation. The polypeptide is Soluble pyridine nucleotide transhydrogenase (Shigella flexneri).